A 170-amino-acid chain; its full sequence is uncharacterized protein (170 aa).

It belongs to the mimivirus L223/L227/L812 family.

This is an uncharacterized protein from Acanthamoeba polyphaga mimivirus (APMV).